The chain runs to 655 residues: MATIESILHENRIFPPASEFVRNANLSGREAYETLRQEAEHDYTGFWAKLAQQYIAWHKPFTRVLNDANPPFYKWFDDGELNISWNCLDRHLATQADKTAIIFESDAGEVNHCSYRELHRQVCHFANGLKSLGIRQGDRVVIYMPMRIEAVVAMQACARIGAIHSVVFGGFSAKSVYERIIDAGASAVITADEQIRGGRYHPLKATVDEALAMGDTATVHSVIVFRHTGTGITWQPERDHWWHDLIAGQPDECEPAWINAEHPLFTLYTSGSTGKPKGVQHSSAGYLLGAVTSMQWVFDYHADDVFWCTADVGWVTGHSYVAYGPLAIGATQVIFEGTPTHPHAGRFWEIIQKHRITTFYTAPTAIRSLIKLGSDLPAKYDLSSLRLLGSVGEPINPEAWMWYYTVVGQSRCPVVDTWWQTETGCHMIAPAPGAISTKPGSCTLPLPGIDAAVVDETGHPVEQGKGGFLVIKRPFPSMLRTLWNDPERFRKTYFPTDIAGGRYYLAGDSAHRDQDGYFWIMGRVDDVLNVSGHRLGTMEIESALVAHPLVAEAAVVGKPHEIKGEVVVAFVTLREKLPDDQRAAEIAATLREWVASEIGAIARPEEIRFGENLPKTRSGKIMRRLLRALARGETITQDVSTLENPVILEQLSQTV.

CoA contacts are provided by residues 196–199 (RGGR) and T316. ATP contacts are provided by residues 392–394 (GEP), 416–421 (DTWWQT), D508, and R523. S531 provides a ligand contact to CoA. Position 534 (R534) interacts with ATP. Mg(2+) is bound by residues V545, H547, and V550. Residue K620 is modified to N6-acetyllysine.

It belongs to the ATP-dependent AMP-binding enzyme family. Requires Mg(2+) as cofactor. Acetylated. Deacetylation by the SIR2-homolog deacetylase activates the enzyme.

It catalyses the reaction acetate + ATP + CoA = acetyl-CoA + AMP + diphosphate. Functionally, catalyzes the conversion of acetate into acetyl-CoA (AcCoA), an essential intermediate at the junction of anabolic and catabolic pathways. AcsA undergoes a two-step reaction. In the first half reaction, AcsA combines acetate with ATP to form acetyl-adenylate (AcAMP) intermediate. In the second half reaction, it can then transfer the acetyl group from AcAMP to the sulfhydryl group of CoA, forming the product AcCoA. In Nitrosomonas europaea (strain ATCC 19718 / CIP 103999 / KCTC 2705 / NBRC 14298), this protein is Acetyl-coenzyme A synthetase.